Reading from the N-terminus, the 319-residue chain is Ribosomal RNA small subunit methyltransferase H (319 aa).

S-adenosyl-L-methionine is bound by residues 38–40 (GGH), D58, F82, D104, and Q111.

It belongs to the methyltransferase superfamily. RsmH family.

It is found in the cytoplasm. The catalysed reaction is cytidine(1402) in 16S rRNA + S-adenosyl-L-methionine = N(4)-methylcytidine(1402) in 16S rRNA + S-adenosyl-L-homocysteine + H(+). In terms of biological role, specifically methylates the N4 position of cytidine in position 1402 (C1402) of 16S rRNA. The sequence is that of Ribosomal RNA small subunit methyltransferase H from Histophilus somni (strain 129Pt) (Haemophilus somnus).